We begin with the raw amino-acid sequence, 278 residues long: ABC transporter I family member 11, chloroplastic (278 aa).

A chloroplast-targeting transit peptide spans 1–49 (MAVSTFSSPTPVFGIAEPPASFSSTAIGWKQPLRFRRTKKPRVISCDYS). One can recognise an ABC transporter domain in the interval 51–278 (IEVRDVCYRP…GVLVAERPPL (228 aa)). 85–92 (GKSGSGKT) serves as a coordination point for ATP.

This sequence belongs to the ABC transporter superfamily. ABCI family.

It is found in the plastid. The protein localises to the chloroplast. The chain is ABC transporter I family member 11, chloroplastic (ABCI11) from Arabidopsis thaliana (Mouse-ear cress).